The primary structure comprises 207 residues: Glycerol-3-phosphate acyltransferase (207 aa).

6 helical membrane passes run 7–27, 58–78, 83–103, 116–136, 141–161, and 166–186; these read YALA…LVIV, LATF…FTLL, VGFV…WLGF, LAFV…LGLF, ISSL…WLMG, and LILA…RENI.

It belongs to the PlsY family. Probably interacts with PlsX.

Its subcellular location is the cell inner membrane. It carries out the reaction an acyl phosphate + sn-glycerol 3-phosphate = a 1-acyl-sn-glycero-3-phosphate + phosphate. Its pathway is lipid metabolism; phospholipid metabolism. Functionally, catalyzes the transfer of an acyl group from acyl-phosphate (acyl-PO(4)) to glycerol-3-phosphate (G3P) to form lysophosphatidic acid (LPA). This enzyme utilizes acyl-phosphate as fatty acyl donor, but not acyl-CoA or acyl-ACP. The protein is Glycerol-3-phosphate acyltransferase of Hyphomonas neptunium (strain ATCC 15444).